The following is a 315-amino-acid chain: BTB/POZ domain-containing adapter for CUL3-mediated RhoA degradation protein 3 (315 aa).

Met1 is subject to N-acetylmethionine. The residue at position 23 (Ser23) is a Phosphoserine. The BTB domain occupies 32 to 100; it reads KYVKLNVGGA…LRDGAVPLPE (69 aa). Residues 239–245 carry the Interaction with PCNA motif; that stretch reads QTKVEFP. The segment at 269-294 is disordered; that stretch reads NALLEATGGAAGRSHHLDEDEERERE.

This sequence belongs to the BACURD family. Homotetramer; forms a two-fold symmetric tetramer in solution. Interacts with CUL3; interaction is direct and forms a 5:5 heterodecamer. Component of the BCR(BACURD3) E3 ubiquitin ligase complex, at least composed of CUL3, KCTD10/BACURD3 and RBX1. Interacts with DNA polymerase delta subunit 2/POLD2. Interacts with PCNA. As to expression, expressed at highest levels in lung. Also detected in testis and heart. Very low expression, if any, in brain, liver, spleen, kidney and skeletal muscle.

Its subcellular location is the nucleus. It functions in the pathway protein modification; protein ubiquitination. Substrate-specific adapter of a BCR (BTB-CUL3-RBX1) E3 ubiquitin-protein ligase complex. The BCR(BACURD3) E3 ubiquitin ligase complex mediates the ubiquitination of target proteins, leading to their degradation by the proteasome. The sequence is that of BTB/POZ domain-containing adapter for CUL3-mediated RhoA degradation protein 3 (Kctd10) from Rattus norvegicus (Rat).